Consider the following 516-residue polypeptide: MTALDTDTPTAGRSAPLISPGPVIPPPDFGPLDRAQGWAMTAIITALAAITRFLNLGSPTDAGTPIFDEKHYAPQAWQVLHNDGVEDNPGYGLVVHPPVGKQLIAIGEWLFGYNGLGWRFSGAVCGVIIVMLVTRIARRISRSTLVGAIAGLLIIADGVSFVSSRTALLDVFLVMFAVAAFACLMVDRDQVRERMYHAFLDGRIAETRWGPRLGVRWWRFGAGVLLGLACATKWSGLYFVLFFGVMTLVFDAIARKQYHVPHPWRGMLRRDLGPAAYVFGLIPFAVYLASYAPWFASETAVNRYEVGRSIGPDSILPIPDALRSLWHYTHAAYRFHSNLTNADGNHHPWESKPWTWPMSLRPVLYAIDNQDVPGCGAQSCVKAVMLVGTPAMWFIAVPVLGWALWRTVVRRDWRYGAVLVGYMAGFLPWFADIDRQMYFFYATVMAPFLVLAIALILGDILYKPNQNPERRTLGLLTVCFYVALVITNFAWMYPILTGLPISQTTWNLQIWLPSWR.

The segment covering 1-11 has biased composition (polar residues); that stretch reads MTALDTDTPTA. Residues 1-23 are disordered; it reads MTALDTDTPTAGRSAPLISPGPV. 9 helical membrane passes run 113–133, 143–163, 166–186, 234–254, 275–295, 384–404, 413–433, 437–457, and 473–493; these read YNGL…VMLV, STLV…SFVS, TALL…CLMV, WSGL…DAIA, AAYV…APWF, VMLV…GWAL, WRYG…FADI, MYFF…ALIL, and LGLL…AWMY.

It belongs to the glycosyltransferase 39 family.

The protein localises to the cell membrane. The protein operates within protein modification; protein glycosylation. In terms of biological role, protein O-mannosyltransferase that catalyzes the transfer of a single mannose residue from a polyprenol phospho-mannosyl lipidic donor to the hydroxyl group of selected serine and threonine residues in acceptor proteins. Involved in DNA conjugation, in at least the recipient strain. In Mycolicibacterium smegmatis (strain MKD8) (Mycobacterium smegmatis), this protein is Polyprenol-phosphate-mannose--protein mannosyltransferase (pmt).